A 427-amino-acid polypeptide reads, in one-letter code: Type II methyltransferase M1.BsuMI (427 aa).

Positions 84 to 427 constitute an SAM-dependent MTase C5-type domain; that stretch reads INIADLFSGC…SYLLALHQLR (344 aa). C176 is a catalytic residue.

Belongs to the class I-like SAM-binding methyltransferase superfamily. C5-methyltransferase family. Monomer. May form a complex with YdiP, also seems to be active alone.

It carries out the reaction a 2'-deoxycytidine in DNA + S-adenosyl-L-methionine = a 5-methyl-2'-deoxycytidine in DNA + S-adenosyl-L-homocysteine + H(+). With respect to regulation, somewhat inhibited by MgCl(2) and spermidine, strongly inhibited by MnCl(2). Functionally, a methylase, recognizes the double-stranded sequence 5'-YTCGAR-3', methylates C-3 on both strands, and protects the DNA from cleavage by the BsuMI endonuclease. The sequence is that of Type II methyltransferase M1.BsuMI (ydiO) from Bacillus subtilis (strain 168).